We begin with the raw amino-acid sequence, 119 residues long: Large ribosomal subunit protein bL20 (119 aa).

The protein belongs to the bacterial ribosomal protein bL20 family.

Functionally, binds directly to 23S ribosomal RNA and is necessary for the in vitro assembly process of the 50S ribosomal subunit. It is not involved in the protein synthesizing functions of that subunit. The chain is Large ribosomal subunit protein bL20 from Stenotrophomonas maltophilia (strain R551-3).